The primary structure comprises 1733 residues: Collagen alpha-1(XXIV) chain (1733 aa).

The N-terminal stretch at 1–35 (MHLGAYRTRHGKVSPTTETKLFLRFIVLCVVWISV) is a signal peptide. Residues 102–229 (ISLRQPLTVL…TVCQLEIMPS (128 aa)) form the Laminin G-like domain. N157 is a glycosylation site (N-linked (GlcNAc...) asparagine). The interval 257-335 (PHTAGMPTRH…SQEHQTPRAQ (79 aa)) is disordered. A compositionally biased stretch (polar residues) spans 312 to 324 (IPNNRSNGSATVH). Residues N366, N396, and N448 are each glycosylated (N-linked (GlcNAc...) asparagine). The disordered stretch occupies residues 505-1499 (YLRGPKGDPG…GPPGAPGPRR (995 aa)). 15 consecutive Collagen-like domains span residues 506-561 (LRGP…PGLS), 577-636 (GLVG…KGVR), 679-738 (GPAG…KGEQ), 742-801 (GEPG…PGQN), 802-861 (GPEG…KGEV), 886-945 (GSIG…KGQR), 946-1005 (GPRG…SGDV), 1006-1065 (GPAG…PGPR), 1072-1131 (GEEG…PGQR), 1135-1189 (GKKG…GIPG), 1191-1215 (RGHQGQPGPSGLPGPKGEKGYPGED), 1220-1279 (GPPG…KGER), 1316-1375 (GVDG…KGEQ), 1376-1435 (GLPG…AGIV), and 1439-1498 (GPKG…PGPR). The segment covering 512 to 524 (DPGPPGPPGPMGI) has biased composition (pro residues). Composition is skewed to low complexity over residues 573–599 (PGLLGLVGPPGLQGAKGLKGHPGLPGL) and 699–708 (PGVTGSVGPA). Residues 776–789 (DPGPQGPSGPPGPE) are compositionally biased toward pro residues. A compositionally biased stretch (pro residues) spans 912-921 (PGPPGAPGPM). Over residues 923 to 944 (PLGLPGLVGARGAPGSPGPKGQ) the composition is skewed to low complexity. The segment covering 1045–1054 (GAKGDGGPAG) has biased composition (gly residues). Residues 1056-1074 (AGATGEPGPRGEPGAPGEE) are compositionally biased toward low complexity. The span at 1084 to 1093 (GAPGGSGLPG) shows a compositional bias: gly residues. Positions 1175-1205 (PLGLMGPEGEPGIPGYRGHQGQPGPSGLPGP) are enriched in low complexity. The span at 1237–1246 (TGEHGEEGYK) shows a compositional bias: basic and acidic residues. The segment covering 1323–1339 (YPGKPGLPGKQGLLGVP) has biased composition (low complexity). Gly residues predominate over residues 1352–1361 (GPQGGKGASG). Composition is skewed to low complexity over residues 1371 to 1386 (PKGEQGLPGQPGVPGQ) and 1434 to 1444 (IVGIVGPKGPI). Positions 1485–1495 (QPGPPGPPGAP) are enriched in pro residues. In terms of domain architecture, Fibrillar collagen NC1 spans 1534 to 1733 (SDIFKTLTYL…YIESNSVCFL (200 aa)).

The protein belongs to the fibrillar collagen family. In terms of tissue distribution, expressed in skeleton. Found at ossification centers of the craniofacial, axial and appendicular skeleton. Also expressed in retina and to a lower extent in cornea, skin and tendon.

It is found in the secreted. The protein resides in the extracellular space. The protein localises to the extracellular matrix. Involved in osteoblast differentiation. The sequence is that of Collagen alpha-1(XXIV) chain (Col24a1) from Mus musculus (Mouse).